The following is a 168-amino-acid chain: HTH-type transcriptional regulator IscR (168 aa).

The region spanning Lys-2–Lys-131 is the HTH rrf2-type domain. The segment at residues Leu-28 to Lys-51 is a DNA-binding region (H-T-H motif). 3 residues coordinate [2Fe-2S] cluster: Cys-92, Cys-98, and Cys-104.

[2Fe-2S] cluster serves as cofactor.

Functionally, regulates the transcription of several operons and genes involved in the biogenesis of Fe-S clusters and Fe-S-containing proteins. This chain is HTH-type transcriptional regulator IscR, found in Vibrio campbellii (strain ATCC BAA-1116).